We begin with the raw amino-acid sequence, 205 residues long: Lipoprotein MlpB (205 aa).

The first 17 residues, 1-17, serve as a signal peptide directing secretion; it reads MKIINILFCLLLIVLNS. C18 carries the N-palmitoyl cysteine lipid modification. The S-diacylglycerol cysteine moiety is linked to residue C18.

Belongs to the Multicopy lipoprotein (Mlp) family.

It localises to the cell outer membrane. An outer membrane protein that may participate in pathogenesis. Some human Lyme disease patients have antibodies against this protein. The Mlp proteins probably undergo intragenic recombination, generating new alleles. The polypeptide is Lipoprotein MlpB (Borreliella burgdorferi (strain ATCC 35210 / DSM 4680 / CIP 102532 / B31) (Borrelia burgdorferi)).